The sequence spans 108 residues: N(4)-acetylcytidine amidohydrolase (108 aa).

One can recognise an ASCH domain in the interval 5-102; the sequence is ITFFQRLERS…NDLFFISFRV (98 aa). Lys20 acts as the Proton acceptor in catalysis. The active-site Nucleophile is the Thr23. The Proton donor role is filled by Glu73.

Belongs to the N(4)-acetylcytidine amidohydrolase family.

The enzyme catalyses N(4)-acetylcytidine + H2O = cytidine + acetate + H(+). The catalysed reaction is N(4)-acetyl-2'-deoxycytidine + H2O = 2'-deoxycytidine + acetate + H(+). It carries out the reaction N(4)-acetylcytosine + H2O = cytosine + acetate + H(+). In terms of biological role, catalyzes the hydrolysis of N(4)-acetylcytidine (ac4C). This Moritella marina (Vibrio marinus) protein is N(4)-acetylcytidine amidohydrolase.